The primary structure comprises 508 residues: Protein FAM227B (508 aa).

Disordered stretches follow at residues 1–22 (MAGQ…MQEP) and 485–508 (ASLS…EEEY). Over residues 486 to 497 (SLSSSSSSSPSS) the composition is skewed to low complexity.

The protein belongs to the FAM227 family.

The sequence is that of Protein FAM227B (FAM227B) from Homo sapiens (Human).